Reading from the N-terminus, the 297-residue chain is N-acetylneuraminate lyase (297 aa).

S47 and T48 together coordinate aceneuramate. Residue Y137 is the Proton donor of the active site. Residue K165 is the Schiff-base intermediate with substrate of the active site. 5 residues coordinate aceneuramate: T167, G189, D191, E192, and S208.

Belongs to the DapA family. NanA subfamily. As to quaternary structure, homotetramer.

It is found in the cytoplasm. It carries out the reaction aceneuramate = aldehydo-N-acetyl-D-mannosamine + pyruvate. It participates in amino-sugar metabolism; N-acetylneuraminate degradation; D-fructose 6-phosphate from N-acetylneuraminate: step 1/5. Functionally, catalyzes the reversible aldol cleavage of N-acetylneuraminic acid (sialic acid; Neu5Ac) to form pyruvate and N-acetylmannosamine (ManNAc) via a Schiff base intermediate. The chain is N-acetylneuraminate lyase from Salmonella agona (strain SL483).